The primary structure comprises 269 residues: 4-hydroxy-tetrahydrodipicolinate reductase (269 aa).

NAD(+) is bound by residues 8–13 (GAGGRM) and glutamate 34. Arginine 35 provides a ligand contact to NADP(+). NAD(+)-binding positions include 98–100 (GTT) and 122–125 (ASNY). The Proton donor/acceptor role is filled by histidine 155. Position 156 (histidine 156) interacts with (S)-2,3,4,5-tetrahydrodipicolinate. The active-site Proton donor is lysine 159. 165 to 166 (GT) is a (S)-2,3,4,5-tetrahydrodipicolinate binding site.

This sequence belongs to the DapB family.

The protein localises to the cytoplasm. It carries out the reaction (S)-2,3,4,5-tetrahydrodipicolinate + NAD(+) + H2O = (2S,4S)-4-hydroxy-2,3,4,5-tetrahydrodipicolinate + NADH + H(+). It catalyses the reaction (S)-2,3,4,5-tetrahydrodipicolinate + NADP(+) + H2O = (2S,4S)-4-hydroxy-2,3,4,5-tetrahydrodipicolinate + NADPH + H(+). The protein operates within amino-acid biosynthesis; L-lysine biosynthesis via DAP pathway; (S)-tetrahydrodipicolinate from L-aspartate: step 4/4. Catalyzes the conversion of 4-hydroxy-tetrahydrodipicolinate (HTPA) to tetrahydrodipicolinate. This chain is 4-hydroxy-tetrahydrodipicolinate reductase, found in Haemophilus ducreyi (strain 35000HP / ATCC 700724).